The following is a 434-amino-acid chain: Trigger factor (434 aa).

In terms of domain architecture, PPIase FKBP-type spans 160–245 (GDKVKMNFVG…LTEVLAANLP (86 aa)).

Belongs to the FKBP-type PPIase family. Tig subfamily.

It is found in the cytoplasm. The enzyme catalyses [protein]-peptidylproline (omega=180) = [protein]-peptidylproline (omega=0). Involved in protein export. Acts as a chaperone by maintaining the newly synthesized protein in an open conformation. Functions as a peptidyl-prolyl cis-trans isomerase. This chain is Trigger factor, found in Shewanella sp. (strain MR-4).